The chain runs to 117 residues: Large ribosomal subunit protein uL18 (117 aa).

Belongs to the universal ribosomal protein uL18 family. In terms of assembly, part of the 50S ribosomal subunit; part of the 5S rRNA/L5/L18/L25 subcomplex. Contacts the 5S and 23S rRNAs.

Its function is as follows. This is one of the proteins that bind and probably mediate the attachment of the 5S RNA into the large ribosomal subunit, where it forms part of the central protuberance. The protein is Large ribosomal subunit protein uL18 of Vibrio campbellii (strain ATCC BAA-1116).